The following is an 85-amino-acid chain: Large ribosomal subunit protein bL27 (85 aa).

The tract at residues 1-21 (MAHKKAGGSTRNGRDSESKRL) is disordered.

The protein belongs to the bacterial ribosomal protein bL27 family.

The chain is Large ribosomal subunit protein bL27 from Photorhabdus laumondii subsp. laumondii (strain DSM 15139 / CIP 105565 / TT01) (Photorhabdus luminescens subsp. laumondii).